The chain runs to 310 residues: Junctional adhesion molecule C (310 aa).

An N-terminal signal peptide occupies residues 1–31 (MALSRRLRLRLCARLPDFFLLLLFRGCVIEA). At 32–241 (VNLKSSNRNP…GQDMEVYDLN (210 aa)) the chain is on the extracellular side. Residues 35–127 (KSSNRNPVVH…VALNDRKEVD (93 aa)) enclose the Ig-like V-type domain. 2 disulfides stabilise this stretch: C53–C115 and C160–C219. 2 N-linked (GlcNAc...) asparagine glycosylation sites follow: N104 and N192. The region spanning 139 to 236 (PVAPVCRVPK…AARCEGQDME (98 aa)) is the Ig-like C2-type domain. Residues 242 to 262 (IAGIIGGVLVVLIVLAVITMG) traverse the membrane as a helical segment. At 263–310 (ICCAYRRGCFISSKQDGESYKSPGKHEGVNYIRTSEEGDFRHKSSFVI) the chain is on the cytoplasmic side. 2 S-palmitoyl cysteine lipidation sites follow: C264 and C265.

The protein belongs to the immunoglobulin superfamily. As to quaternary structure, interacts with ITGAM. Interacts with GORASP2. Post-translationally, proteolytically cleaved from endothelial cells surface into a soluble form by ADAM10 and ADAM17; the release of soluble JAM3 is increased by pro-inflammatory factors. S-palmitoylated by ZDHHC7. S-palmitoylation promotes expression at tight junctions.

The protein resides in the cell membrane. The protein localises to the cell junction. It localises to the desmosome. It is found in the tight junction. Its subcellular location is the secreted. In terms of biological role, junctional adhesion protein that mediates heterotypic cell-cell interactions with its cognate receptor JAM2 to regulate different cellular processes. Plays a role in homing and mobilization of hematopoietic stem and progenitor cells within the bone marrow. At the surface of bone marrow stromal cells, it contributes to the retention of the hematopoietic stem and progenitor cells expressing JAM3. Plays a central role in leukocytes extravasation by facilitating transmigration through the endothelium. Plays a role in spermatogenesis where JAM2 and JAM3, which are respectively expressed by Sertoli and germ cells, mediate an interaction between both cell types and play an essential role in the anchorage of germ cells onto Sertoli cells and the assembly of cell polarity complexes during spermatid differentiation. Also functions as a counter-receptor for ITGAM, mediating leukocyte-platelet interactions and is involved in the regulation of transepithelial migration of polymorphonuclear neutrophils (PMN). Plays a role in angiogenesis. Plays a role in the regulation of cell migration. During myogenesis, it is involved in myocyte fusion. Promotes chemotaxis of vascular endothelial cells and stimulates angiogenesis. This chain is Junctional adhesion molecule C (Jam3), found in Rattus norvegicus (Rat).